We begin with the raw amino-acid sequence, 788 residues long: Autophagy-related protein 9 (788 aa).

The Cytoplasmic portion of the chain corresponds to Met-1–Gly-171. The span at Ile-32–Gln-42 shows a compositional bias: basic and acidic residues. The segment at Ile-32–Arg-127 is disordered. The segment covering Ser-44–Asp-58 has biased composition (low complexity). Polar residues predominate over residues Ser-101–Ile-112. The chain crosses the membrane as a helical span at residues Leu-172–Phe-192. The Lumenal portion of the chain corresponds to Ser-193–Lys-222. Residues Leu-223–Phe-243 form a helical membrane-spanning segment. The Cytoplasmic segment spans residues Gln-244–Arg-390. An intramembrane region is located at residue Phe-391. Topologically, residues Val-392–Lys-479 are cytoplasmic. A helical membrane pass occupies residues Phe-480 to Pro-500. At Glu-501–Arg-512 the chain is on the lumenal side. The helical transmembrane segment at Thr-513–Pro-533 threads the bilayer. Residues Glu-534–Arg-579 lie on the Cytoplasmic side of the membrane. Residues Leu-580–Ser-600 lie within the membrane without spanning it. The Cytoplasmic segment spans residues Leu-601–Ala-788. The tract at residues Leu-715–Arg-736 is disordered. Low complexity predominate over residues Ser-716 to Ala-734.

This sequence belongs to the ATG9 family. Homotrimer; forms a homotrimer with a central pore that forms a path between the two membrane leaflets. Phosphorylated by ATG1. ATG1 phosphorylation is required for preautophagosome elongation.

Its subcellular location is the preautophagosomal structure membrane. The protein resides in the cytoplasmic vesicle membrane. The protein localises to the golgi apparatus membrane. It localises to the endoplasmic reticulum membrane. It carries out the reaction a 1,2-diacyl-sn-glycero-3-phosphocholine(in) = a 1,2-diacyl-sn-glycero-3-phosphocholine(out). The catalysed reaction is a 1,2-diacyl-sn-glycero-3-phospho-L-serine(in) = a 1,2-diacyl-sn-glycero-3-phospho-L-serine(out). It catalyses the reaction a 1,2-diacyl-sn-glycero-3-phosphoethanolamine(in) = a 1,2-diacyl-sn-glycero-3-phosphoethanolamine(out). The enzyme catalyses a 1,2-diacyl-sn-glycero-3-phospho-(1D-myo-inositol-3-phosphate)(in) = a 1,2-diacyl-sn-glycero-3-phospho-(1D-myo-inositol-3-phosphate)(out). Functionally, phospholipid scramblase involved in autophagy and cytoplasm to vacuole transport (Cvt) vesicle formation. Cycles between the preautophagosomal structure/phagophore assembly site (PAS) and the cytoplasmic vesicle pool and supplies membrane for the growing autophagosome. Lipid scramblase activity plays a key role in preautophagosomal structure/phagophore assembly by distributing the phospholipids that arrive through ATG2 from the cytoplasmic to the luminal leaflet of the bilayer, thereby driving autophagosomal membrane expansion. Required for mitophagy. Also involved in endoplasmic reticulum-specific autophagic process and is essential for the survival of cells subjected to severe ER stress. Different machineries are required for anterograde trafficking to the PAS during either the Cvt pathway or bulk autophagy and for retrograde trafficking. This Yarrowia lipolytica (strain CLIB 122 / E 150) (Yeast) protein is Autophagy-related protein 9.